Reading from the N-terminus, the 947-residue chain is Bifunctional glutamine synthetase adenylyltransferase/adenylyl-removing enzyme (947 aa).

An adenylyl removase region spans residues 1 to 443; it reads MQLPSSLVSV…VFETLIGDDE (443 aa). The adenylyl transferase stretch occupies residues 451 to 947; sequence ARHFHELWDM…VKQAWNQWFA (497 aa).

This sequence belongs to the GlnE family. The cofactor is Mg(2+).

The enzyme catalyses [glutamine synthetase]-O(4)-(5'-adenylyl)-L-tyrosine + phosphate = [glutamine synthetase]-L-tyrosine + ADP. It catalyses the reaction [glutamine synthetase]-L-tyrosine + ATP = [glutamine synthetase]-O(4)-(5'-adenylyl)-L-tyrosine + diphosphate. Its function is as follows. Involved in the regulation of glutamine synthetase GlnA, a key enzyme in the process to assimilate ammonia. When cellular nitrogen levels are high, the C-terminal adenylyl transferase (AT) inactivates GlnA by covalent transfer of an adenylyl group from ATP to specific tyrosine residue of GlnA, thus reducing its activity. Conversely, when nitrogen levels are low, the N-terminal adenylyl removase (AR) activates GlnA by removing the adenylyl group by phosphorolysis, increasing its activity. The regulatory region of GlnE binds the signal transduction protein PII (GlnB) which indicates the nitrogen status of the cell. In Vibrio parahaemolyticus serotype O3:K6 (strain RIMD 2210633), this protein is Bifunctional glutamine synthetase adenylyltransferase/adenylyl-removing enzyme.